Reading from the N-terminus, the 257-residue chain is Probable ssDNA-binding protein (257 aa).

A disordered region spans residues 222–257; that stretch reads AFMEGRENKDDDAKSGNSNAGSQKGIDQEAASDLDD. Residues 225–235 are compositionally biased toward basic and acidic residues; the sequence is EGRENKDDDAK.

Its function is as follows. Required during DNA replication. Displaced viral DNA strands are transiently coated with the ssDNA-binding protein. It is then probably removed by the replisome that performs lagging strand synthesis or during the events that lead up to the recombination process. This Escherichia phage T5 (Enterobacteria phage T5) protein is Probable ssDNA-binding protein (D11).